Here is a 164-residue protein sequence, read N- to C-terminus: MSSESKLIPIGIISSPYGIRGQVAIKSFTDPASNILNYELKDYRKNIIKIHSAKILSKKIICNIDQIVTRTAAEQLTRTKLYIYKHELPQLPDSEYYVANLNGIKVKNLEGEIIGKINNICNYNAGDIIEVVYNDGKKIMYPFTNEIFPQITEDFVVIVPPEFI.

Residues 93–164 (DSEYYVANLN…FVVIVPPEFI (72 aa)) form the PRC barrel domain.

Belongs to the RimM family. As to quaternary structure, binds ribosomal protein uS19.

The protein resides in the cytoplasm. An accessory protein needed during the final step in the assembly of 30S ribosomal subunit, possibly for assembly of the head region. Essential for efficient processing of 16S rRNA. May be needed both before and after RbfA during the maturation of 16S rRNA. It has affinity for free ribosomal 30S subunits but not for 70S ribosomes. The chain is Ribosome maturation factor RimM from Orientia tsutsugamushi (strain Boryong) (Rickettsia tsutsugamushi).